The sequence spans 127 residues: uncharacterized protein (127 aa).

Residues Met-1–Gly-23 form the signal peptide.

This is an uncharacterized protein from Arabidopsis thaliana (Mouse-ear cress).